We begin with the raw amino-acid sequence, 327 residues long: GMP reductase (327 aa).

The active-site Thioimidate intermediate is Cys176. 205–228 (IIADGGIRTHGDIAKSIRFGASMV) lines the NADP(+) pocket.

It belongs to the IMPDH/GMPR family. GuaC type 2 subfamily.

It catalyses the reaction IMP + NH4(+) + NADP(+) = GMP + NADPH + 2 H(+). Catalyzes the irreversible NADPH-dependent deamination of GMP to IMP. It functions in the conversion of nucleobase, nucleoside and nucleotide derivatives of G to A nucleotides, and in maintaining the intracellular balance of A and G nucleotides. This Streptococcus suis (strain 98HAH33) protein is GMP reductase.